Consider the following 200-residue polypeptide: Putative glucose-6-phosphate isomerase 2 (200 aa).

Residues His92, His94, Glu101, and His140 each coordinate Fe cation.

The protein belongs to the archaeal-type GPI family. Homodimer. It depends on Fe cation as a cofactor.

Its subcellular location is the cytoplasm. It carries out the reaction alpha-D-glucose 6-phosphate = beta-D-fructose 6-phosphate. It participates in carbohydrate degradation; glycolysis; D-glyceraldehyde 3-phosphate and glycerone phosphate from D-glucose: step 2/4. This Rhizobium meliloti (strain 1021) (Ensifer meliloti) protein is Putative glucose-6-phosphate isomerase 2 (pgiA2).